The sequence spans 415 residues: Protein fuzzy homolog (415 aa).

Belongs to the fuzzy family. In terms of assembly, component of the CPLANE (ciliogenesis and planar polarity effectors) complex, composed of INTU, FUZ and WDPCP. Interacts with CPLANE1 and CPLANE2.

It is found in the cytoplasm. The protein resides in the cytoskeleton. Its subcellular location is the cilium basal body. Functionally, probable planar cell polarity effector involved in cilium biogenesis. Proposed to function as core component of the CPLANE (ciliogenesis and planar polarity effectors) complex involved in the recruitment of peripheral IFT-A proteins to basal bodies. May regulate protein and membrane transport to the cilium. May regulate the morphogenesis of hair follicles which depends on functional primary cilia. Binds phosphatidylinositol 3-phosphate with highest affinity, followed by phosphatidylinositol 4-phosphate and phosphatidylinositol 5-phosphate. The polypeptide is Protein fuzzy homolog (Fuz) (Rattus norvegicus (Rat)).